A 918-amino-acid chain; its full sequence is Exostosin-like 3 (918 aa).

The Cytoplasmic portion of the chain corresponds to 1–30 (MTGYTMLRNGGVGNGGQTCMLRWSNRIRLT). The segment at 1-140 (MTGYTMLRNG…LKNVISQTEH (140 aa)) is required for interaction with REG3A. The helical; Signal-anchor for type II membrane protein transmembrane segment at 31–51 (WLSFTLFIILVFFPLIAHYYL) threads the bilayer. Residues 52–918 (TTLDEADEAG…HDKTKCFKFI (867 aa)) lie on the Lumenal side of the membrane. Cystine bridges form between Cys-177-Cys-182 and Cys-188-Cys-236. Asn-290 is a glycosylation site (N-linked (GlcNAc...) asparagine). Ser-361 carries the phosphoserine modification. Residues Cys-399 and Cys-414 are joined by a disulfide bond. Asn-591 carries N-linked (GlcNAc...) asparagine glycosylation. Positions 667, 671, 696, 722, 727, 743, 744, and 745 each coordinate UDP-N-acetyl-alpha-D-glucosamine. Asp-745 serves as a coordination point for Mn(2+). A glycan (N-linked (GlcNAc...) asparagine) is linked at Asn-789. Cys-830 and Cys-878 are joined by a disulfide. Positions 831, 832, and 875 each coordinate UDP-N-acetyl-alpha-D-glucosamine. Asp-832 is an active-site residue.

This sequence belongs to the glycosyltransferase 47 family. Homodimer; disulfide-linked. Interacts with REG3A. Mn(2+) is required as a cofactor. In terms of tissue distribution, expressed in pancreatic islet beta-cells. Expressed in lung epithelial cells. Expressed in microglia.

It localises to the endoplasmic reticulum membrane. It is found in the golgi apparatus. The protein localises to the cell membrane. Its subcellular location is the nucleus. The enzyme catalyses 3-O-(beta-D-GlcA-(1-&gt;3)-beta-D-Gal-(1-&gt;3)-beta-D-Gal-(1-&gt;4)-beta-D-Xyl)-L-seryl-[protein] + UDP-N-acetyl-alpha-D-glucosamine = 3-O-(alpha-D-GlcNAc-(1-&gt;4)-beta-D-GlcA-(1-&gt;3)-beta-D-Gal-(1-&gt;3)-beta-D-Gal-(1-&gt;4)-beta-D-Xyl)-L-seryl-[protein] + UDP + H(+). It functions in the pathway glycan metabolism; heparan sulfate biosynthesis. In terms of biological role, glycosyltransferase which regulates the biosynthesis of heparan sulfate (HS). Initiates HS synthesis by transferring the first N-acetyl-alpha-D-glucosamine (alpha-GlcNAc) residue (GlcNAcT-I activity) to the tetrasaccharide linker (GlcA-Gal-Gal-Xyl-)Ser core linker. May also transfer alpha-GlcNAc residues during HS elongation (GlcNAcT-II activity). Lacks glucuronyl transferase II (GlcAT-II) activity. Important for both skeletal development and hematopoiesis, through the formation of HS proteoglycans (HSPGs). Through the synthesis of HS, regulates postnatal pancreatic islet maturation and insulin secretion. Its function is as follows. Receptor for REG3A, REG3B and REG3G, induces the activation of downstream signaling pathways such as PI3K-AKT or RAS-RAF-MEK-ERK signaling pathway. Required for the function of REG3A in regulating keratinocyte proliferation and differentiation. Required for the inhibition of skin inflammation mediated by REG3A through the activation of PI3K-AKT-STAT3 pathway. Required for the function of REG3A and REG3G in glucose tolerance in pancreas. Expressed in microglia, is activated by nociceptor-derived REG3G in response to endotoxins, leading to the inhibition of kynurenine pathway to prevent endotoxic death. This Mus musculus (Mouse) protein is Exostosin-like 3.